We begin with the raw amino-acid sequence, 386 residues long: uncharacterized protein (386 aa).

The protein belongs to the TelA family.

This is an uncharacterized protein from Bacillus subtilis (strain 168).